A 947-amino-acid polypeptide reads, in one-letter code: Bromodomain testis-specific protein (947 aa).

Positions 27-133 (RLTNQLQYLQ…KLFVQKLSQM (107 aa)) constitute a Bromo 1 domain. Phosphoserine is present on Ser-187. The Nuclear localization signal motif lies at 209 to 220 (KGVKRKADTTTP). The Bromo 2 domain occupies 267–376 (VKVTEQLRHC…DVFETHFSKI (110 aa)). Disordered regions lie at residues 395–421 (ETTG…ERVQ), 444–512 (PFRK…PMNY), 610–690 (NNQL…VKKM), and 849–873 (HLEQ…GLTV). Low complexity predominate over residues 403-413 (NEASSEGNSSG). Positions 417–470 (DERVQRLAKLQEQLKAVHQQLQVLSQVPFRKLNKKKEKSKKEKKKEKVNNSNEN) form a coiled coil. Over residues 447-462 (KLNKKKEKSKKEKKKE) the composition is skewed to basic residues. Residues 470 to 481 (NPRKMCEQMRLK) are compositionally biased toward basic and acidic residues. Over residues 482–494 (EKSKRNQPKKRKQ) the composition is skewed to basic residues. The NET domain occupies 500 to 582 (KSEDEDNAKP…ACLRKRPLKP (83 aa)). Residues 631–668 (VGSVSRLSESSSSSSSSSESESSSSDLSSSDSSGSESE) are compositionally biased toward low complexity. Composition is skewed to basic and acidic residues over residues 674–690 (TEVK…VKKM) and 849–865 (HLEQ…ENQR).

Belongs to the BET family. Interacts with SMARCE1. Interacts with mRNA splicing machinery proteins SRSF2, DDX5, HNRNPK and TARDBP. Interacts with the acetylated N-terminus of histone H1, H2, H3 and H4. Interacts with P-TEFb components CDK9 and CCNT1/cyclin-T1. Post-translationally, ubiquitinated in a SPOP-dependent manner, leading to proteasomal degradation.

Its subcellular location is the nucleus. In terms of biological role, testis-specific chromatin protein that specifically binds histone H4 acetylated at 'Lys-5' and 'Lys-8' (H4K5ac and H4K8ac, respectively) and plays a key role in spermatogenesis. Required in late pachytene spermatocytes: plays a role in meiotic and post-meiotic cells by binding to acetylated histones at the promoter of specific meiotic and post-meiotic genes, facilitating their activation at the appropriate time. In the post-meiotic phase of spermatogenesis, binds to hyperacetylated histones and participates in their general removal from DNA. Also recognizes and binds a subset of butyrylated histones: able to bind histone H4 butyrylated at 'Lys-8' (H4K8ac), while it is not able to bind H4 butyrylated at 'Lys-5' (H4K5ac). Also acts as a component of the splicing machinery in pachytene spermatocytes and round spermatids and participates in 3'-UTR truncation of specific mRNAs in post-meiotic spermatids. Required for chromocenter organization, a structure comprised of peri-centromeric heterochromatin. The chain is Bromodomain testis-specific protein (BRDT) from Macaca fascicularis (Crab-eating macaque).